The sequence spans 245 residues: Geranylgeranylglyceryl phosphate synthase (245 aa).

Mg(2+)-binding residues include Asp-22 and Ser-51. Residues 169–175 (YLEAGSG), 200–201 (GG), and 222–223 (GT) contribute to the sn-glycerol 1-phosphate site.

Belongs to the GGGP/HepGP synthase family. Group II subfamily. Homotetramer. Homohexamer. Mg(2+) serves as cofactor.

The protein localises to the cytoplasm. The catalysed reaction is sn-glycerol 1-phosphate + (2E,6E,10E)-geranylgeranyl diphosphate = sn-3-O-(geranylgeranyl)glycerol 1-phosphate + diphosphate. It functions in the pathway membrane lipid metabolism; glycerophospholipid metabolism. Prenyltransferase that catalyzes the transfer of the geranylgeranyl moiety of geranylgeranyl diphosphate (GGPP) to the C3 hydroxyl of sn-glycerol-1-phosphate (G1P). This reaction is the first ether-bond-formation step in the biosynthesis of archaeal membrane lipids. The sequence is that of Geranylgeranylglyceryl phosphate synthase from Methanothermobacter thermautotrophicus (strain ATCC 29096 / DSM 1053 / JCM 10044 / NBRC 100330 / Delta H) (Methanobacterium thermoautotrophicum).